The chain runs to 449 residues: MNYNNKILVSESGLSQKHLIHGDEELFQHELKTIFARNWLFLTHDSLIPAPGDYVTAKMGIDEVIVSRQNDGSIRAFLNVCRHRGKTLVSVEAGNAKGFVCSYHGWGFGSNGELQSVPFEKDLYGESLNKKCLGLKEVARVESFHGFIYGCFDQEAPPLMDYLGDAAWYLEPMFKHSGGLELVGPPGKVVIKANWKAPAENFVGDAYHVGWTHASSLRSGESIFSSLAGNAALPPEGAGLQMTSKYGSGMGVLWDGYSGVHSADLVPELMAFGGAKQERLNKEIGDVRARIYRSHLNCTVFPNNSMLTCSGVFKVWNPIDANTTEVWTYAIVEKDMPEDLKRRLADSVQRTFGPAGFWESDDNDNMETASQNGKKYQSRDSDLLSNLGFGEDVYGDAVYPGVVGKSAIGETSYRGFYRAYQAHVSSSNWAEFEHASSTWHTELTKTTDR.

The region spanning 39 to 137 (WLFLTHDSLI…LNKKCLGLKE (99 aa)) is the Rieske domain. C81, H83, C101, and H104 together coordinate [2Fe-2S] cluster. Fe cation contacts are provided by H208, H213, and D362.

This sequence belongs to the bacterial ring-hydroxylating dioxygenase alpha subunit family. In terms of assembly, the naphthalene dioxygenase (NDO) multicomponent enzyme system is composed of an electron transfer component and a dioxygenase component (iron sulfur protein (ISP)). The electron transfer component is composed of a ferredoxin reductase (NdoR) and a ferredoxin (NdoA), and the dioxygenase component is formed of a heterohexamer (trimer of heterodimers) of three large alpha subunits (NdoB) and three small beta subunits (NdoC). [2Fe-2S] cluster is required as a cofactor. Fe(2+) serves as cofactor.

The catalysed reaction is naphthalene + NADH + O2 + H(+) = (1R,2S)-1,2-dihydronaphthalene-1,2-diol + NAD(+). It functions in the pathway aromatic compound metabolism; naphthalene degradation. Component of the naphthalene dioxygenase (NDO) multicomponent enzyme system which catalyzes the incorporation of both atoms of molecular oxygen into naphthalene to form cis-(1R,2S)-dihydroxy-1,2-dihydronaphthalene. The alpha subunit has a catalytic role in the holoenzyme. Also able to catalyze the cis-dihydroxylation of biphenyl and phenanthrene. The sequence is that of Naphthalene 1,2-dioxygenase system, large oxygenase component from Pseudomonas putida (Arthrobacter siderocapsulatus).